We begin with the raw amino-acid sequence, 165 residues long: Cytochrome c-type biogenesis protein CcmE (165 aa).

Topologically, residues 1 to 29 (MSATAEQNARNPKGKGGFARTVSQRKRKR) are cytoplasmic. A helical; Signal-anchor for type II membrane protein membrane pass occupies residues 30 to 50 (LFLIGGALAVLAVAVGLMLTA). Residues 51-165 (FNQDIRFFRT…LKKKGVWEGK (115 aa)) are Periplasmic-facing. Residues His143 and Tyr147 each coordinate heme.

The protein belongs to the CcmE/CycJ family.

It is found in the cell inner membrane. Functionally, heme chaperone required for the biogenesis of c-type cytochromes. Transiently binds heme delivered by CcmC and transfers the heme to apo-cytochromes in a process facilitated by CcmF and CcmH. The chain is Cytochrome c-type biogenesis protein CcmE from Brucella abortus (strain S19).